Consider the following 426-residue polypeptide: Probable auxin efflux carrier component 9 (426 aa).

Over methionine 1–glutamate 6 the chain is Extracellular. A helical transmembrane segment spans residues valine 7–serine 27. Residues valine 28 to glutamine 38 are Cytoplasmic-facing. Residues cysteine 39 to valine 59 form a helical membrane-spanning segment. Valine 51 is a (indol-3-yl)acetate binding site. At serine 60 to arginine 70 the chain is on the extracellular side. Residues leucine 71–leucine 91 traverse the membrane as a helical segment. At tryptophan 92 to tryptophan 114 the chain is on the cytoplasmic side. A helical transmembrane segment spans residues valine 115 to leucine 135. (indol-3-yl)acetate contacts are provided by asparagine 126 and isoleucine 128. Topologically, residues asparagine 136–aspartate 145 are extracellular. Residues leucine 146 to tyrosine 166 form a helical membrane-spanning segment. Tyrosine 159 contributes to the (indol-3-yl)acetate binding site. Residues glutamate 167–serine 286 are Cytoplasmic-facing. The disordered stretch occupies residues arginine 232 to glutamate 258. A helical membrane pass occupies residues phenylalanine 287–valine 307. The Extracellular segment spans residues glutamate 308–serine 310. A helical membrane pass occupies residues leucine 311 to alanine 331. Topologically, residues arginine 332–serine 347 are cytoplasmic. The chain crosses the membrane as a helical span at residues methionine 348–methionine 368. Over histidine 369–threonine 371 the chain is Extracellular. Residues leucine 372–alanine 392 form a helical membrane-spanning segment. A (indol-3-yl)acetate-binding site is contributed by valine 386. Residues glutamate 393–glycine 405 are Cytoplasmic-facing. A helical transmembrane segment spans residues valine 406 to leucine 426.

It belongs to the auxin efflux carrier (TC 2.A.69.1) family. In terms of assembly, homodimer. As to expression, expressed in roots, leaves and shoot apex. Expressed in roots, stem bases, stems, leaves and young panicles.

Its subcellular location is the membrane. Functionally, may act as a component of the auxin efflux carrier. This Oryza sativa subsp. japonica (Rice) protein is Probable auxin efflux carrier component 9.